The primary structure comprises 68 residues: Tabimmunregulin 12 (68 aa).

The N-terminal stretch at 1-24 is a signal peptide; the sequence is MLFKSYVYFLAGLLLVGLFTSCDA. Residues 25–38 constitute a propeptide that is removed on maturation; that stretch reads DAQYEELVPGFFRK.

In terms of tissue distribution, expressed in salivary glands.

The protein resides in the secreted. Its function is as follows. Horsefly salivary gland immunosuppressant protein that likely inhibits the host inflammatory response by regulation of anti- and pro-inflammatory cytokines. When tested on mouse splenocytes in the presence of LPS, it increases the secretion of the proinflammatory cytokine interleukin-10 (IL10) and decreases the secretion of the proinflammatory cytokine interferon-gamma (IFNG) in a dose-dependent manner. The protein is Tabimmunregulin 12 of Tabanus yao (Horsefly).